The primary structure comprises 431 residues: Adenylosuccinate lyase (431 aa).

N(6)-(1,2-dicarboxyethyl)-AMP-binding positions include 4–5, 67–69, and 93–94; these read RY, RHD, and TS. The active-site Proton donor/acceptor is the H141. Residue Q212 coordinates N(6)-(1,2-dicarboxyethyl)-AMP. Catalysis depends on S262, which acts as the Proton donor/acceptor. Residues S263, 268-270, and 307-311 each bind N(6)-(1,2-dicarboxyethyl)-AMP; these read KRN and SVERV.

This sequence belongs to the lyase 1 family. Adenylosuccinate lyase subfamily. Homooligomer. Residues from neighboring subunits contribute catalytic and substrate-binding residues to each active site.

The enzyme catalyses N(6)-(1,2-dicarboxyethyl)-AMP = fumarate + AMP. It catalyses the reaction (2S)-2-[5-amino-1-(5-phospho-beta-D-ribosyl)imidazole-4-carboxamido]succinate = 5-amino-1-(5-phospho-beta-D-ribosyl)imidazole-4-carboxamide + fumarate. It functions in the pathway purine metabolism; AMP biosynthesis via de novo pathway; AMP from IMP: step 2/2. It participates in purine metabolism; IMP biosynthesis via de novo pathway; 5-amino-1-(5-phospho-D-ribosyl)imidazole-4-carboxamide from 5-amino-1-(5-phospho-D-ribosyl)imidazole-4-carboxylate: step 2/2. Its function is as follows. Catalyzes two reactions in de novo purine nucleotide biosynthesis. Catalyzes the breakdown of 5-aminoimidazole- (N-succinylocarboxamide) ribotide (SAICAR or 2-[5-amino-1-(5-phospho-beta-D-ribosyl)imidazole-4-carboxamido]succinate) to 5-aminoimidazole-4-carboxamide ribotide (AICAR or 5-amino-1-(5-phospho-beta-D-ribosyl)imidazole-4-carboxamide) and fumarate, and of adenylosuccinate (ADS or N(6)-(1,2-dicarboxyethyl)-AMP) to adenosine monophosphate (AMP) and fumarate. This chain is Adenylosuccinate lyase (purB), found in Synechocystis sp. (strain ATCC 27184 / PCC 6803 / Kazusa).